The chain runs to 256 residues: Ribosomal RNA small subunit methyltransferase A (256 aa).

S-adenosyl-L-methionine is bound by residues Asn12, Leu14, Gly39, Glu60, Asp85, and Asn103.

Belongs to the class I-like SAM-binding methyltransferase superfamily. rRNA adenine N(6)-methyltransferase family. RsmA subfamily.

The protein localises to the cytoplasm. The catalysed reaction is adenosine(1518)/adenosine(1519) in 16S rRNA + 4 S-adenosyl-L-methionine = N(6)-dimethyladenosine(1518)/N(6)-dimethyladenosine(1519) in 16S rRNA + 4 S-adenosyl-L-homocysteine + 4 H(+). Specifically dimethylates two adjacent adenosines (A1518 and A1519) in the loop of a conserved hairpin near the 3'-end of 16S rRNA in the 30S particle. May play a critical role in biogenesis of 30S subunits. This Legionella pneumophila (strain Corby) protein is Ribosomal RNA small subunit methyltransferase A.